A 156-amino-acid chain; its full sequence is RING finger protein 224 (156 aa).

An RING-type zinc finger spans residues 23 to 70; it reads CIICYSAYDLSVHLPRRLYCGHTFCQACMQRLDMPAHEQHWIPCPQCR.

The protein is RING finger protein 224 (Rnf224) of Mus musculus (Mouse).